Here is a 275-residue protein sequence, read N- to C-terminus: Large ribosomal subunit protein uL2 (275 aa).

2 disordered regions span residues 36 to 55 (GLTGSGGRNNTGRITARRMG) and 224 to 263 (VVMNPIDHPHGGGEGRTSGGRHPVTPWGKPTKGKKTRQNK).

It belongs to the universal ribosomal protein uL2 family. As to quaternary structure, part of the 50S ribosomal subunit. Forms a bridge to the 30S subunit in the 70S ribosome.

One of the primary rRNA binding proteins. Required for association of the 30S and 50S subunits to form the 70S ribosome, for tRNA binding and peptide bond formation. It has been suggested to have peptidyltransferase activity; this is somewhat controversial. Makes several contacts with the 16S rRNA in the 70S ribosome. The protein is Large ribosomal subunit protein uL2 of Rhodospirillum centenum (strain ATCC 51521 / SW).